Here is a 203-residue protein sequence, read N- to C-terminus: Protein GrpE (203 aa).

Basic and acidic residues predominate over residues 1 to 10 (MSNESIKAEQ). Residues 1–20 (MSNESIKAEQDLIQEGVESE) form a disordered region.

This sequence belongs to the GrpE family. Homodimer.

It localises to the cytoplasm. In terms of biological role, participates actively in the response to hyperosmotic and heat shock by preventing the aggregation of stress-denatured proteins, in association with DnaK and GrpE. It is the nucleotide exchange factor for DnaK and may function as a thermosensor. Unfolded proteins bind initially to DnaJ; upon interaction with the DnaJ-bound protein, DnaK hydrolyzes its bound ATP, resulting in the formation of a stable complex. GrpE releases ADP from DnaK; ATP binding to DnaK triggers the release of the substrate protein, thus completing the reaction cycle. Several rounds of ATP-dependent interactions between DnaJ, DnaK and GrpE are required for fully efficient folding. This Shewanella sp. (strain MR-4) protein is Protein GrpE.